Here is a 145-residue protein sequence, read N- to C-terminus: MADRLTQLQDAVNSLADQFCNAIGVLQQCAPPASFSNIQTAINKDQPSNPTEEYAQLFAALIARTAKDVDVLIDSLPSEESTAALQAASLRQLEEENQEAAARLEEVVYRGDALLEKIQTALADIAQSQLRTRSGAPSQQTPPES.

The stretch at 79-112 (EESTAALQAASLRQLEEENQEAAARLEEVVYRGD) forms a coiled coil.

The protein belongs to the Mediator complex subunit 21 family. Component of the Mediator complex.

The protein localises to the nucleus. Functionally, component of the Mediator complex, a coactivator involved in the regulated transcription of nearly all RNA polymerase II-dependent genes. Mediator functions as a bridge to convey information from gene-specific regulatory proteins to the basal RNA polymerase II transcription machinery. Mediator is recruited to promoters by direct interactions with regulatory proteins and serves as a scaffold for the assembly of a functional preinitiation complex with RNA polymerase II and the general transcription factors. The protein is Mediator of RNA polymerase II transcription subunit 21 (med21) of Danio rerio (Zebrafish).